The following is a 625-amino-acid chain: Transferrin-binding protein B (625 aa).

An N-terminal signal peptide occupies residues 1 to 17; the sequence is MKSVPLISGGLSLFLSA. Cys-18 carries the N-palmitoyl cysteine lipid modification. A lipid anchor (S-diacylglycerol cysteine) is attached at Cys-18. Disordered regions lie at residues 25-52, 99-125, 275-298, and 584-610; these read FDVD…KKSN, KKEN…QNHH, VKPT…GGFY, and FTYN…KARA. Residues 276-292 are compositionally biased toward basic and acidic residues; the sequence is KPTEKDSEEHPFTREGT. Residues 587–605 show a composition bias toward polar residues; that stretch reads NGKNPTDKNSPTASSPSNS.

This sequence belongs to the TbpB family.

The protein resides in the cell outer membrane. Its subcellular location is the cell surface. Haemophilus acquires iron by extracting it from serum transferrin (TF) in its human host. Acts as a transferrin receptor and is required for transferrin utilization. The chain is Transferrin-binding protein B (tbpB) from Haemophilus influenzae (strain ATCC 51907 / DSM 11121 / KW20 / Rd).